The sequence spans 209 residues: Large ribosomal subunit protein uL3 (209 aa).

Q150 is subject to N5-methylglutamine.

It belongs to the universal ribosomal protein uL3 family. In terms of assembly, part of the 50S ribosomal subunit. Forms a cluster with proteins L14 and L19. Methylated by PrmB.

Functionally, one of the primary rRNA binding proteins, it binds directly near the 3'-end of the 23S rRNA, where it nucleates assembly of the 50S subunit. The protein is Large ribosomal subunit protein uL3 of Vibrio vulnificus (strain YJ016).